The primary structure comprises 409 residues: Serine/threonine transporter SstT (409 aa).

A run of 9 helical transmembrane segments spans residues 24 to 44 (LALG…AGLF), 48 to 68 (FVGA…AATI), 82 to 102 (IIVL…IAGM), 142 to 162 (AIAN…GAAL), 194 to 214 (LGIF…ALAG), 218 to 238 (LLAV…PAIV), 292 to 312 (IPLG…VLAM), 319 to 339 (GIQV…VSAC), and 365 to 385 (VAMQ…SAET).

The protein belongs to the dicarboxylate/amino acid:cation symporter (DAACS) (TC 2.A.23) family.

It is found in the cell inner membrane. It catalyses the reaction L-serine(in) + Na(+)(in) = L-serine(out) + Na(+)(out). The catalysed reaction is L-threonine(in) + Na(+)(in) = L-threonine(out) + Na(+)(out). Functionally, involved in the import of serine and threonine into the cell, with the concomitant import of sodium (symport system). This chain is Serine/threonine transporter SstT, found in Neisseria meningitidis serogroup C (strain 053442).